A 617-amino-acid polypeptide reads, in one-letter code: Ceramide transfer protein (617 aa).

The span at 1–11 shows a compositional bias: polar residues; the sequence is MSDNQSWNSSG. A disordered region spans residues 1–23; it reads MSDNQSWNSSGSEEDLEPESGPP. One can recognise a PH domain in the interval 23-117; that stretch reads PVERCGVLSK…WIDSIEQHKS (95 aa). Residues 268–302 adopt a coiled-coil conformation; sequence REDSWQKRLDKEIEKRRRVEEAYKNAMTELKKKSH. Positions 320 to 326 match the FFAT motif; sequence EFFDAVE. Positions 341 to 382 are disordered; that stretch reads EKGRSHWPPSPPSSEAHTAAGSHRLVQAPPSCPPPTDLVSSS. Residues 383-611 enclose the START domain; the sequence is DEHRFRIQVE…FTSYVQEKTA (229 aa). 4 residues coordinate an N-acylsphing-4-enine: Glu466, Gln487, Asn524, and Tyr572.

Its subcellular location is the cytoplasm. It is found in the golgi apparatus. The protein localises to the endoplasmic reticulum. The enzyme catalyses N-hexadecanoylsphing-4-enine(in) = N-hexadecanoylsphing-4-enine(out). Its function is as follows. May mediate the intracellular trafficking of ceramide in a non-vesicular manner. The protein is Ceramide transfer protein (cert1) of Xenopus laevis (African clawed frog).